A 477-amino-acid polypeptide reads, in one-letter code: Erythritol/L-threitol-binding protein (477 aa).

A signal peptide (tat-type signal) is located at residues 1-38 (MMSRESQPGLHRQLSRRNMLAAMGLAGAAAVSLPVLSA).

It belongs to the bacterial solute-binding protein 1 family. In terms of processing, predicted to be exported by the Tat system. The position of the signal peptide cleavage has not been experimentally proven.

In terms of biological role, part of an ABC transporter complex involved in erythritol/L-threitol import. Binds erythritol and L-threitol. Functions in the transport for the degradation pathways of erythritol and L-threitol, that allow M.smegmatis to grow on these compounds as the sole carbon source. This is Erythritol/L-threitol-binding protein from Mycolicibacterium smegmatis (strain ATCC 700084 / mc(2)155) (Mycobacterium smegmatis).